Consider the following 433-residue polypeptide: uncharacterized protein (433 aa).

The Radical SAM core domain maps to 104–349; that stretch reads ERGRNIIQVR…ELEYKKKGIE (246 aa). 3 residues coordinate [4Fe-4S] cluster: cysteine 118, cysteine 122, and cysteine 125. S-adenosyl-L-methionine contacts are provided by residues 171-172 and 236-238; these read GE and MLS. A TRAM domain is found at 370–433; sequence PFKVGEVTKV…KDNIIVAELV (64 aa).

Belongs to the radical SAM superfamily. [4Fe-4S] cluster is required as a cofactor.

This is an uncharacterized protein from Methanocaldococcus jannaschii (strain ATCC 43067 / DSM 2661 / JAL-1 / JCM 10045 / NBRC 100440) (Methanococcus jannaschii).